We begin with the raw amino-acid sequence, 351 residues long: Histidinol-phosphate aminotransferase (351 aa).

Lys-215 carries the N6-(pyridoxal phosphate)lysine modification.

Belongs to the class-II pyridoxal-phosphate-dependent aminotransferase family. Histidinol-phosphate aminotransferase subfamily. Pyridoxal 5'-phosphate is required as a cofactor.

It catalyses the reaction L-histidinol phosphate + 2-oxoglutarate = 3-(imidazol-4-yl)-2-oxopropyl phosphate + L-glutamate. It participates in amino-acid biosynthesis; L-histidine biosynthesis; L-histidine from 5-phospho-alpha-D-ribose 1-diphosphate: step 7/9. This Methanocorpusculum labreanum (strain ATCC 43576 / DSM 4855 / Z) protein is Histidinol-phosphate aminotransferase.